A 1059-amino-acid polypeptide reads, in one-letter code: Putative ATP-dependent RNA helicase BoYb (1059 aa).

The Q motif motif lies at 54–82 (RRFAEVSLLPDILETMRNLGLNRLLRLQS). The Helicase ATP-binding domain maps to 87-284 (HLAGGSGHGA…RAVNDKPALV (198 aa)). 100-107 (GSPASGRT) contributes to the ATP binding site. The short motif at 230-233 (DDVD) is the DEAD box element. In terms of domain architecture, Tudor spans 575-639 (PPVAGAICMY…GKLFECPEAL (65 aa)). Residues 756–787 (VQDSKEKANSKPHEKMKGKMTDQPAKLQSQPP) form a disordered region. A compositionally biased stretch (basic and acidic residues) spans 757–775 (QDSKEKANSKPHEKMKGKM).

The protein resides in the cytoplasm. It carries out the reaction ATP + H2O = ADP + phosphate + H(+). In terms of biological role, involved in primary piRNA biogenesis in germline cells. This Drosophila melanogaster (Fruit fly) protein is Putative ATP-dependent RNA helicase BoYb (BoYb).